The following is a 458-amino-acid chain: Monomethylamine methyltransferase MtmB1 (458 aa).

A non-standard amino acid (pyrrolysine) is located at residue Pyl202.

This sequence belongs to the monomethylamine methyltransferase family. As to quaternary structure, can form a complex with MtmC.

It catalyses the reaction Co(I)-[methylamine-specific corrinoid protein] + methylamine + H(+) = methyl-Co(III)-[methylamine-specific corrinoid protein] + NH4(+). Its pathway is one-carbon metabolism; methanogenesis from methylamine. Functionally, catalyzes the transfer of the methyl group from monomethylamine to the corrinoid cofactor of MtmC. In Methanosarcina acetivorans (strain ATCC 35395 / DSM 2834 / JCM 12185 / C2A), this protein is Monomethylamine methyltransferase MtmB1 (mtmB1).